A 69-amino-acid polypeptide reads, in one-letter code: Ribosome modulation factor (69 aa).

This sequence belongs to the ribosome modulation factor family.

It is found in the cytoplasm. In terms of biological role, during stationary phase, converts 70S ribosomes to an inactive dimeric form (100S ribosomes). The chain is Ribosome modulation factor from Marinomonas mediterranea (strain ATCC 700492 / JCM 21426 / NBRC 103028 / MMB-1).